The sequence spans 473 residues: DNA gyrase subunit A (473 aa).

In terms of domain architecture, Topo IIA-type catalytic spans 1-473; the sequence is MGNYHPHGNA…GFVSHNTEAR (473 aa). Y49 acts as the O-(5'-phospho-DNA)-tyrosine intermediate in catalysis. Residues 175–315 enclose the DOD-type homing endonuclease domain; sequence LLGAFISEGF…VQQMLLEFGI (141 aa).

It belongs to the type II topoisomerase GyrA/ParC subunit family. In terms of assembly, heterotetramer, composed of two GyrA and two GyrB chains. In the heterotetramer, GyrA contains the active site tyrosine that forms a transient covalent intermediate with DNA, while GyrB binds cofactors and catalyzes ATP hydrolysis. This protein undergoes a protein self splicing that involves a post-translational excision of the intervening region (intein) followed by peptide ligation.

Its subcellular location is the cytoplasm. It catalyses the reaction ATP-dependent breakage, passage and rejoining of double-stranded DNA.. In terms of biological role, a type II topoisomerase that negatively supercoils closed circular double-stranded (ds) DNA in an ATP-dependent manner to modulate DNA topology and maintain chromosomes in an underwound state. Negative supercoiling favors strand separation, and DNA replication, transcription, recombination and repair, all of which involve strand separation. Also able to catalyze the interconversion of other topological isomers of dsDNA rings, including catenanes and knotted rings. Type II topoisomerases break and join 2 DNA strands simultaneously in an ATP-dependent manner. This is DNA gyrase subunit A (gyrA) from Mycobacterium malmoense.